A 263-amino-acid polypeptide reads, in one-letter code: Acyl-[acyl-carrier-protein]--UDP-N-acetylglucosamine O-acyltransferase (263 aa).

It belongs to the transferase hexapeptide repeat family. LpxA subfamily. In terms of assembly, homotrimer.

The protein localises to the cytoplasm. The enzyme catalyses a (3R)-hydroxyacyl-[ACP] + UDP-N-acetyl-alpha-D-glucosamine = a UDP-3-O-[(3R)-3-hydroxyacyl]-N-acetyl-alpha-D-glucosamine + holo-[ACP]. The protein operates within glycolipid biosynthesis; lipid IV(A) biosynthesis; lipid IV(A) from (3R)-3-hydroxytetradecanoyl-[acyl-carrier-protein] and UDP-N-acetyl-alpha-D-glucosamine: step 1/6. Involved in the biosynthesis of lipid A, a phosphorylated glycolipid that anchors the lipopolysaccharide to the outer membrane of the cell. This chain is Acyl-[acyl-carrier-protein]--UDP-N-acetylglucosamine O-acyltransferase, found in Xanthomonas euvesicatoria pv. vesicatoria (strain 85-10) (Xanthomonas campestris pv. vesicatoria).